The chain runs to 336 residues: 4-hydroxy-3-methylbut-2-enyl diphosphate reductase (336 aa).

Residues Met1 to Thr23 form a disordered region. Cys36 provides a ligand contact to [4Fe-4S] cluster. (2E)-4-hydroxy-3-methylbut-2-enyl diphosphate contacts are provided by His65 and His98. Dimethylallyl diphosphate contacts are provided by His65 and His98. Isopentenyl diphosphate is bound by residues His65 and His98. Cys120 is a [4Fe-4S] cluster binding site. His148 is a binding site for (2E)-4-hydroxy-3-methylbut-2-enyl diphosphate. His148 contacts dimethylallyl diphosphate. His148 is an isopentenyl diphosphate binding site. Glu150 acts as the Proton donor in catalysis. Thr190 serves as a coordination point for (2E)-4-hydroxy-3-methylbut-2-enyl diphosphate. A [4Fe-4S] cluster-binding site is contributed by Cys220. Positions 248, 249, 250, and 293 each coordinate (2E)-4-hydroxy-3-methylbut-2-enyl diphosphate. Residues Ser248, Ser249, Asn250, and Ser293 each contribute to the dimethylallyl diphosphate site. Positions 248, 249, 250, and 293 each coordinate isopentenyl diphosphate.

It belongs to the IspH family. Requires [4Fe-4S] cluster as cofactor.

It catalyses the reaction isopentenyl diphosphate + 2 oxidized [2Fe-2S]-[ferredoxin] + H2O = (2E)-4-hydroxy-3-methylbut-2-enyl diphosphate + 2 reduced [2Fe-2S]-[ferredoxin] + 2 H(+). The catalysed reaction is dimethylallyl diphosphate + 2 oxidized [2Fe-2S]-[ferredoxin] + H2O = (2E)-4-hydroxy-3-methylbut-2-enyl diphosphate + 2 reduced [2Fe-2S]-[ferredoxin] + 2 H(+). It participates in isoprenoid biosynthesis; dimethylallyl diphosphate biosynthesis; dimethylallyl diphosphate from (2E)-4-hydroxy-3-methylbutenyl diphosphate: step 1/1. It functions in the pathway isoprenoid biosynthesis; isopentenyl diphosphate biosynthesis via DXP pathway; isopentenyl diphosphate from 1-deoxy-D-xylulose 5-phosphate: step 6/6. Its function is as follows. Catalyzes the conversion of 1-hydroxy-2-methyl-2-(E)-butenyl 4-diphosphate (HMBPP) into a mixture of isopentenyl diphosphate (IPP) and dimethylallyl diphosphate (DMAPP). Acts in the terminal step of the DOXP/MEP pathway for isoprenoid precursor biosynthesis. In Corynebacterium efficiens (strain DSM 44549 / YS-314 / AJ 12310 / JCM 11189 / NBRC 100395), this protein is 4-hydroxy-3-methylbut-2-enyl diphosphate reductase.